The primary structure comprises 456 residues: Argininosuccinate lyase (456 aa).

The protein belongs to the lyase 1 family. Argininosuccinate lyase subfamily.

It localises to the cytoplasm. The catalysed reaction is 2-(N(omega)-L-arginino)succinate = fumarate + L-arginine. The protein operates within amino-acid biosynthesis; L-arginine biosynthesis; L-arginine from L-ornithine and carbamoyl phosphate: step 3/3. The protein is Argininosuccinate lyase of Listeria monocytogenes serotype 4b (strain CLIP80459).